Here is a 427-residue protein sequence, read N- to C-terminus: Histidinol dehydrogenase (427 aa).

Serine 232, glutamine 254, and histidine 257 together coordinate substrate. Zn(2+) contacts are provided by glutamine 254 and histidine 257. Residues glutamate 322 and histidine 323 each act as proton acceptor in the active site. Substrate-binding residues include histidine 323, aspartate 356, glutamate 410, and histidine 415. Position 356 (aspartate 356) interacts with Zn(2+). A Zn(2+)-binding site is contributed by histidine 415.

Belongs to the histidinol dehydrogenase family. Zn(2+) is required as a cofactor.

The catalysed reaction is L-histidinol + 2 NAD(+) + H2O = L-histidine + 2 NADH + 3 H(+). The protein operates within amino-acid biosynthesis; L-histidine biosynthesis; L-histidine from 5-phospho-alpha-D-ribose 1-diphosphate: step 9/9. In terms of biological role, catalyzes the sequential NAD-dependent oxidations of L-histidinol to L-histidinaldehyde and then to L-histidine. The chain is Histidinol dehydrogenase from Listeria monocytogenes serovar 1/2a (strain ATCC BAA-679 / EGD-e).